Consider the following 62-residue polypeptide: Photosystem II reaction center protein Z (62 aa).

Helical transmembrane passes span 8 to 28 and 41 to 61; these read AVFALIVTSFLLVIGVPVVLA and FSGASLWIGLVFLVGILNSFV.

This sequence belongs to the PsbZ family. As to quaternary structure, PSII is composed of 1 copy each of membrane proteins PsbA, PsbB, PsbC, PsbD, PsbE, PsbF, PsbH, PsbI, PsbJ, PsbK, PsbL, PsbM, PsbT, PsbY, PsbZ, Psb30/Ycf12, at least 3 peripheral proteins of the oxygen-evolving complex and a large number of cofactors. It forms dimeric complexes.

The protein localises to the plastid. It localises to the chloroplast thylakoid membrane. Its function is as follows. May control the interaction of photosystem II (PSII) cores with the light-harvesting antenna, regulates electron flow through the 2 photosystem reaction centers. PSII is a light-driven water plastoquinone oxidoreductase, using light energy to abstract electrons from H(2)O, generating a proton gradient subsequently used for ATP formation. This chain is Photosystem II reaction center protein Z, found in Zygnema circumcarinatum (Green alga).